We begin with the raw amino-acid sequence, 460 residues long: UDP-N-acetylmuramate--L-alanine ligase (460 aa).

112-118 (GTHGKTT) contributes to the ATP binding site.

It belongs to the MurCDEF family.

Its subcellular location is the cytoplasm. It catalyses the reaction UDP-N-acetyl-alpha-D-muramate + L-alanine + ATP = UDP-N-acetyl-alpha-D-muramoyl-L-alanine + ADP + phosphate + H(+). It functions in the pathway cell wall biogenesis; peptidoglycan biosynthesis. Functionally, cell wall formation. The chain is UDP-N-acetylmuramate--L-alanine ligase from Pelobacter propionicus (strain DSM 2379 / NBRC 103807 / OttBd1).